Consider the following 363-residue polypeptide: Transcription factor IIIA (363 aa).

C2H2-type zinc fingers lie at residues 38–62 (FICSFPDCSASYNKAWKLDAHLCKH), 68–92 (FVCDYEGCGKAFIRDYHLSRHILIH), 98–123 (FVCADNGCNQKFSTKSNLKKHIERKH), 130–154 (YVCNFEGCKKAFKKHQQLRTHQCQH), 160–184 (FRCTHEGCGKHFASPSRLKRHGKVH), 187–211 (YLCQKGCSFVGKTWTELLKHTREAH), 215–237 (VTCTVCQKMFKRKDHLKQHMKTH), 244–269 (YRCPREGCARTYTTVFNLQSHILSFH), and 275–299 (FVCEHAGCGKTFAMKQSLMRHSVVH). The segment at 301–363 (PDKKRMKLKV…LAPAALLTVH (63 aa)) is disordered. Low complexity predominate over residues 338 to 350 (SLPNSTESSSSPE).

It localises to the nucleus. Functionally, involved in ribosomal large subunit biogenesis. Binds the approximately 50 base pairs internal control region (ICR) of 5S ribosomal RNA genes. It is required for their RNA polymerase III-dependent transcription and may also maintain the transcription of other genes. Also binds the transcribed 5S RNA's. The chain is Transcription factor IIIA (Gtf3a) from Rattus norvegicus (Rat).